The following is a 91-amino-acid chain: UPF0250 protein Psyr_4360 (91 aa).

Belongs to the UPF0250 family.

The polypeptide is UPF0250 protein Psyr_4360 (Pseudomonas syringae pv. syringae (strain B728a)).